We begin with the raw amino-acid sequence, 389 residues long: Ribosomal RNA large subunit methyltransferase M (389 aa).

A compositionally biased stretch (polar residues) spans 1–13; it reads MIGNARMSQKYPT. Residues 1-24 form a disordered region; sequence MIGNARMSQKYPTSSSRKRSPLSS. Residues S214, 247–250, D266, D286, and D302 contribute to the S-adenosyl-L-methionine site; that span reads APGG. The Proton acceptor role is filled by K331.

The protein belongs to the class I-like SAM-binding methyltransferase superfamily. RNA methyltransferase RlmE family. RlmM subfamily. Monomer.

It localises to the cytoplasm. The enzyme catalyses cytidine(2498) in 23S rRNA + S-adenosyl-L-methionine = 2'-O-methylcytidine(2498) in 23S rRNA + S-adenosyl-L-homocysteine + H(+). Catalyzes the 2'-O-methylation at nucleotide C2498 in 23S rRNA. In Hahella chejuensis (strain KCTC 2396), this protein is Ribosomal RNA large subunit methyltransferase M.